Consider the following 333-residue polypeptide: DNA-directed RNA polymerase subunit alpha (333 aa).

The segment at 1–227 is alpha N-terminal domain (alpha-NTD); the sequence is MRKIKVAPFM…VMNKQLSVFN (227 aa). Positions 247-333 are alpha C-terminal domain (alpha-CTD); that stretch reads ELKPFLAAVD…LVKKLEQLKA (87 aa).

Belongs to the RNA polymerase alpha chain family. As to quaternary structure, homodimer. The RNAP catalytic core consists of 2 alpha, 1 beta, 1 beta' and 1 omega subunit. When a sigma factor is associated with the core the holoenzyme is formed, which can initiate transcription.

It catalyses the reaction RNA(n) + a ribonucleoside 5'-triphosphate = RNA(n+1) + diphosphate. Functionally, DNA-dependent RNA polymerase catalyzes the transcription of DNA into RNA using the four ribonucleoside triphosphates as substrates. The sequence is that of DNA-directed RNA polymerase subunit alpha from Sulfurovum sp. (strain NBC37-1).